Here is an 885-residue protein sequence, read N- to C-terminus: Cadherin-related family member 3 (885 aa).

Positions 1–19 (MQEAIILLALLGAMSGGEA) are cleaved as a signal peptide. Residues 20–713 (LHLILLPATG…VYSPSAWYVP (694 aa)) lie on the Extracellular side of the membrane. 6 Cadherin domains span residues 23–132 (ILLP…PPQF), 136–236 (LAEG…VPRF), 237–344 (TSPT…NPAT), 346–466 (QKFT…RPSY), 462–566 (DRPS…KPIC), and 567–695 (TPNS…RPRV). 2 N-linked (GlcNAc...) asparagine glycosylation sites follow: N186 and N257. N624 is a glycosylation site (N-linked (GlcNAc...) asparagine). Residues 714–734 (FVITLGSILLLGLLVYLVVLL) form a helical membrane-spanning segment. Over 735–885 (AKAIHRHCPC…RAYPKPHPGK (151 aa)) the chain is Cytoplasmic. The disordered stretch occupies residues 808–885 (MPKWKESSHQ…RAYPKPHPGK (78 aa)).

As to quaternary structure, (Microbial infection) Interacts (via N-terminus) with human rhinovirus C capsid proteins VP1, VP2 and VP3. As to expression, expressed in bronchial epithelium from adults and in fetal lung tissue.

Its subcellular location is the cell membrane. Cadherins are calcium-dependent cell adhesion proteins. They preferentially interact with themselves in a homophilic manner in connecting cells; cadherins may thus contribute to the sorting of heterogeneous cell types. Functionally, (Microbial infection) Acts as a receptor for human rhinovirus C. The protein is Cadherin-related family member 3 (CDHR3) of Homo sapiens (Human).